A 388-amino-acid polypeptide reads, in one-letter code: Myosin light chain kinase family member 4 (388 aa).

One can recognise a Protein kinase domain in the interval 106–361; that stretch reads VSKTEILGGG…ASEALKHPWL (256 aa). ATP is bound by residues 112–120 and lysine 135; that span reads LGGGRFGQV. Catalysis depends on aspartate 227, which acts as the Proton acceptor.

This sequence belongs to the protein kinase superfamily. CAMK Ser/Thr protein kinase family.

The catalysed reaction is L-seryl-[protein] + ATP = O-phospho-L-seryl-[protein] + ADP + H(+). The enzyme catalyses L-threonyl-[protein] + ATP = O-phospho-L-threonyl-[protein] + ADP + H(+). The chain is Myosin light chain kinase family member 4 (MYLK4) from Homo sapiens (Human).